A 231-amino-acid chain; its full sequence is Large ribosomal subunit protein uL1 (231 aa).

This sequence belongs to the universal ribosomal protein uL1 family. In terms of assembly, part of the 50S ribosomal subunit.

Its function is as follows. Binds directly to 23S rRNA. The L1 stalk is quite mobile in the ribosome, and is involved in E site tRNA release. Protein L1 is also a translational repressor protein, it controls the translation of the L11 operon by binding to its mRNA. This is Large ribosomal subunit protein uL1 from Neisseria gonorrhoeae (strain ATCC 700825 / FA 1090).